The sequence spans 473 residues: Flavin-dependent L-tryptophan oxidase RebO (473 aa).

The signal sequence occupies residues 1 to 21; the sequence is MSRGHKKITVLGAGVAGLVAA. FAD is bound by residues 15–16, 35–36, R43, 61–64, E444, and 451–456; these read VA, EG, GAMR, and AWIDGA.

This sequence belongs to the flavin monoamine oxidase family. RebO subfamily. Homodimer. The cofactor is FAD.

It carries out the reaction 7-chloro-L-tryptophan + O2 = 3-(7-chloroindol-3-yl)-2-iminopropanoate + H2O2. The enzyme catalyses L-tryptophan + O2 = 2-iminio-3-(indol-3-yl)propanoate + H2O2. Involved in the biosynthesis of the indolocarbazole antitumor agent rebeccamycin. It generates the imine form of 7-chloroindole 3-pyruvate (7Cl-IPA) from 7-chloro-L-tryptophan (7Cl-Trp), with concomitant two-electron reduction of O(2) to H(2)O(2). The enzyme is also active with L-tryptophan as substrate. The protein is Flavin-dependent L-tryptophan oxidase RebO (rebO) of Lentzea aerocolonigenes (Lechevalieria aerocolonigenes).